The primary structure comprises 114 residues: Large ribosomal subunit protein P2v (114 aa).

The interval 74 to 114 (VASGGGGGAAPAAEPASVESKKKEEEKEESEDDGGMMSLFD) is disordered. S103 is subject to Phosphoserine.

Belongs to the eukaryotic ribosomal protein P1/P2 family. In terms of assembly, P1 and P2 exist as dimers at the large ribosomal subunit. In terms of processing, phosphorylated.

Plays an important role in the elongation step of protein synthesis. The protein is Large ribosomal subunit protein P2v (RPP2E) of Arabidopsis thaliana (Mouse-ear cress).